We begin with the raw amino-acid sequence, 618 residues long: Nuclear RNA export factor 1 (618 aa).

Positions 1-15 are enriched in basic and acidic residues; sequence MADEGKSYNEHDDRV. A disordered region spans residues 1–113; it reads MADEGKSYNE…RGGAGTSQDG (113 aa). The residue at position 2 (Ala2) is an N-acetylalanine. The segment at 2–59 is minor non-specific RNA-binding; that stretch reads ADEGKSYNEHDDRVSFPQRRKKGRGPFRWKCGVGNRRSGRGGSGIRSSRFEEDDGDVA. The tract at residues 2–117 is RNA-binding (RBD); the sequence is ADEGKSYNEH…GTSQDGTTKN (116 aa). The tract at residues 2–197 is interaction with ALYREF/THOC4 and LUZP4; the sequence is ADEGKSYNEH…IIINSSAPPY (196 aa). Basic residues predominate over residues 19–28; the sequence is QRRKKGRGPF. Arg41 is subject to Asymmetric dimethylarginine; alternate. Residue Arg41 is modified to Omega-N-methylarginine; alternate. The interval 60–117 is major non-specific RNA-binding; that stretch reads MNDPQDGPRVRFNPYTTRPNRRRDTWHDRDRIHVTVRRDRAPQERGGAGTSQDGTTKN. The RNA binding stretch occupies residues 60 to 117; sequence MNDPQDGPRVRFNPYTTRPNRRRDTWHDRDRIHVTVRRDRAPQERGGAGTSQDGTTKN. The short motif at 66–99 is the Nuclear localization signal element; the sequence is GPRVRFNPYTTRPNRRRDTWHDRDRIHVTVRRDR. The segment covering 81 to 102 has biased composition (basic and acidic residues); sequence RRDTWHDRDRIHVTVRRDRAPQ. The Nuclear export signal motif lies at 82-109; the sequence is RDTWHDRDRIHVTVRRDRAPQERGGAGT. The 80-residue stretch at 118–197 folds into the RRM domain; it reads WFKITIPYGK…IIINSSAPPY (80 aa). Residue Tyr125 is modified to 3'-nitrotyrosine. 4 LRR repeats span residues 265 to 290, 291 to 314, 315 to 342, and 343 to 370; these read ELLS…QKAP, NLKI…IKGL, KLEE…TIRE, and RFPK…TMLP. Positions 385–535 constitute an NTF2 domain; that stretch reads LVLHFLQQYY…LCIVNDELFV (151 aa). A TAP-C domain is found at 564–618; it reads QEQQDMLQAFSTQSGMNLEWSQKCLQDNNWDYTRSAQAFTHLKAKGEIPEVAFMK.

This sequence belongs to the NXF family. In terms of assembly, heterodimer (via NTF2 domain) with NXT1. The formation of NXF1-NXT1 heterodimers is required for the NXF1-mediated nuclear mRNA export. Forms a complex with RANBP2/NUP358, NXT1 and RANGAP1. Associates with the exon junction complex (EJC). Associates with the transcription/export (TREX) complex. Found in a mRNA complex with UPF3A and UPF3B. Found in a post-splicing complex with RBM8A, UPF1, UPF2, UPF3A, UPF3B and RNPS1. Interacts (via N-terminus) with DHX9 (via N-terminus); this interaction is direct and negatively regulates NXF1-mediated nuclear export of constitutive transport element (CTE)-containing cellular mRNAs. Interacts with FYTTD1/UIF. Interacts with EIF4A3. Interacts with NUP42. Interacts with ALYREF/THOC4. Interacts with CHTOP. Interacts with FRG1 (via N-terminus). Interacts with LUZP4. Interacts with FMR1; the interaction occurs in a mRNA-dependent and polyribosomes-independent manner in the nucleus. Interacts with CPSF6 (via N-terminus); this interaction is direct. Interacts with RBM15. Interacts with RBM15B. Interacts with MCM3AP; this interaction is not mediated by RNA. Interacts with DDX3X (via C-terminus); this interaction may be partly involved in DDX3X nuclear export and in NXF1 localization to stress granules. Interacts with PABPC1/PABP1.

The protein localises to the nucleus. The protein resides in the nucleoplasm. Its subcellular location is the nucleus speckle. It localises to the nuclear pore complex. It is found in the nucleus envelope. The protein localises to the cytoplasm. The protein resides in the stress granule. Involved in the nuclear export of mRNA species bearing retroviral constitutive transport elements (CTE) and in the export of mRNA from the nucleus to the cytoplasm (TAP/NFX1 pathway). The NXF1-NXT1 heterodimer is involved in the export of HSP70 mRNA in conjunction with ALYREF/THOC4 and THOC5 components of the TREX complex. ALYREF/THOC4-bound mRNA is thought to be transferred to the NXF1-NXT1 heterodimer for export. Also involved in nuclear export of m6A-containing mRNAs: interaction between SRSF3 and YTHDC1 facilitates m6A-containing mRNA-binding to both SRSF3 and NXF1, promoting mRNA nuclear export. The sequence is that of Nuclear RNA export factor 1 (Nxf1) from Rattus norvegicus (Rat).